Here is a 124-residue protein sequence, read N- to C-terminus: Fluoride-specific ion channel FluC (124 aa).

4 helical membrane passes run 4 to 24 (FVLV…LSGV), 35 to 55 (YGTV…WGIL), 67 to 87 (LLLL…TYEG), and 100 to 120 (ALYI…GAGL). The Na(+) site is built by Gly75 and Thr78.

It belongs to the fluoride channel Fluc/FEX (TC 1.A.43) family.

It is found in the cell inner membrane. It carries out the reaction fluoride(in) = fluoride(out). Its activity is regulated as follows. Na(+) is not transported, but it plays an essential structural role and its presence is essential for fluoride channel function. Fluoride-specific ion channel. Important for reducing fluoride concentration in the cell, thus reducing its toxicity. The polypeptide is Fluoride-specific ion channel FluC (Nitratidesulfovibrio vulgaris (strain ATCC 29579 / DSM 644 / CCUG 34227 / NCIMB 8303 / VKM B-1760 / Hildenborough) (Desulfovibrio vulgaris)).